The chain runs to 207 residues: Ribosomal RNA small subunit methyltransferase G (207 aa).

Residues G73, L78, V124 to E125, and R139 each bind S-adenosyl-L-methionine.

This sequence belongs to the methyltransferase superfamily. RNA methyltransferase RsmG family.

It localises to the cytoplasm. The enzyme catalyses guanosine(527) in 16S rRNA + S-adenosyl-L-methionine = N(7)-methylguanosine(527) in 16S rRNA + S-adenosyl-L-homocysteine. Specifically methylates the N7 position of guanine in position 527 of 16S rRNA. The polypeptide is Ribosomal RNA small subunit methyltransferase G (Escherichia fergusonii (strain ATCC 35469 / DSM 13698 / CCUG 18766 / IAM 14443 / JCM 21226 / LMG 7866 / NBRC 102419 / NCTC 12128 / CDC 0568-73)).